The following is a 240-amino-acid chain: LexA repressor (240 aa).

The segment at residues 26–46 (FDEMKEALDLASKSGIHRLIT) is a DNA-binding region (H-T-H motif). Active-site for autocatalytic cleavage activity residues include Ser-161 and Lys-199.

This sequence belongs to the peptidase S24 family. As to quaternary structure, homodimer.

It carries out the reaction Hydrolysis of Ala-|-Gly bond in repressor LexA.. Its function is as follows. Represses a number of genes involved in the response to DNA damage (SOS response), including recA and lexA. In the presence of single-stranded DNA, RecA interacts with LexA causing an autocatalytic cleavage which disrupts the DNA-binding part of LexA, leading to derepression of the SOS regulon and eventually DNA repair. The protein is LexA repressor of Brucella melitensis biotype 1 (strain ATCC 23456 / CCUG 17765 / NCTC 10094 / 16M).